Consider the following 230-residue polypeptide: Ribose-5-phosphate isomerase A (230 aa).

Residues 31–34, 88–91, and 101–104 contribute to the substrate site; these read TGST, DGSD, and KGGG. E110 (proton acceptor) is an active-site residue. K128 provides a ligand contact to substrate.

This sequence belongs to the ribose 5-phosphate isomerase family. Homodimer.

It carries out the reaction aldehydo-D-ribose 5-phosphate = D-ribulose 5-phosphate. It participates in carbohydrate degradation; pentose phosphate pathway; D-ribose 5-phosphate from D-ribulose 5-phosphate (non-oxidative stage): step 1/1. Its function is as follows. Catalyzes the reversible conversion of ribose-5-phosphate to ribulose 5-phosphate. The polypeptide is Ribose-5-phosphate isomerase A (Lactobacillus acidophilus (strain ATCC 700396 / NCK56 / N2 / NCFM)).